Consider the following 264-residue polypeptide: MAEYLASIFGTEKDKVNCSFYFKIGACRHGDRCSRIHNKPTFSQTVLLQNLYVNPQNSAKSADGSHLVANVSDEEMQEHYDNFFEDVFVECEDKYGEIEEMNVCDNLGDHLVGNVYIKFRNEADAEKAANDLNNRWFGGRPVYSELSPVTDFREACCRQYEMGECTRSGFCNFMHLKPISRELRRYLYSRRRRARSRSRSPGRRRGSRSRSRSPGRRGGGRGDGVGGGNYLNNERDNMRGNDRGNDRDRRKGGGGGGGGGGGRY.

A C3H1-type 1 zinc finger spans residues 12 to 40; the sequence is EKDKVNCSFYFKIGACRHGDRCSRIHNKP. S19 is subject to Phosphoserine. The 106-residue stretch at 44-149 folds into the RRM domain; that stretch reads QTVLLQNLYV…RPVYSELSPV (106 aa). A C3H1-type 2 zinc finger spans residues 151–178; that stretch reads DFREACCRQYEMGECTRSGFCNFMHLKP. Positions 190 to 219 are enriched in basic residues; sequence RRRRARSRSRSPGRRRGSRSRSRSPGRRGG. The interval 190–264 is disordered; that stretch reads RRRRARSRSR…GGGGGGGGRY (75 aa). Basic and acidic residues predominate over residues 233 to 251; that stretch reads NERDNMRGNDRGNDRDRRK. The segment covering 253-264 has biased composition (gly residues); it reads GGGGGGGGGGRY.

Belongs to the splicing factor SR family. Associates with a 65 kDa protein.

It is found in the nucleus. Necessary for the splicing of pre-mRNA. Binds to the polypyrimidine tract of introns early during spliceosome assembly. This is Splicing factor U2af 38 kDa subunit (U2af38) from Drosophila melanogaster (Fruit fly).